Reading from the N-terminus, the 185-residue chain is MMQTTVRGEVVEPYAEALLSLAQTHNLIDQFQQDTQLMVELVASSGELQQFLANPLIKPEAKKNVLRQLTVDKVHGYFLNFLMLLVDRRRINFLSSICEHYRALVRKLRNVALAEVTSAVELNDDQRRAVVEKVKTMTGAADVELVTACDPELIGGVVIKVGSQIFDASLRGQLRRLSVTLAQAT.

Belongs to the ATPase delta chain family. In terms of assembly, F-type ATPases have 2 components, F(1) - the catalytic core - and F(0) - the membrane proton channel. F(1) has five subunits: alpha(3), beta(3), gamma(1), delta(1), epsilon(1). CF(0) has four main subunits: a(1), b(1), b'(1) and c(10-14). The alpha and beta chains form an alternating ring which encloses part of the gamma chain. F(1) is attached to F(0) by a central stalk formed by the gamma and epsilon chains, while a peripheral stalk is formed by the delta, b and b' chains.

It localises to the cellular thylakoid membrane. F(1)F(0) ATP synthase produces ATP from ADP in the presence of a proton or sodium gradient. F-type ATPases consist of two structural domains, F(1) containing the extramembraneous catalytic core and F(0) containing the membrane proton channel, linked together by a central stalk and a peripheral stalk. During catalysis, ATP synthesis in the catalytic domain of F(1) is coupled via a rotary mechanism of the central stalk subunits to proton translocation. Functionally, this protein is part of the stalk that links CF(0) to CF(1). It either transmits conformational changes from CF(0) to CF(1) or is implicated in proton conduction. In terms of biological role, the complex from the organism is particularly stable to disruption and remains functional after 6 hrs at 55 degrees Celsius. The chain is ATP synthase subunit delta from Thermosynechococcus vestitus (strain NIES-2133 / IAM M-273 / BP-1).